The following is a 371-amino-acid chain: Putative glutamate--cysteine ligase 2 (371 aa).

This sequence belongs to the glutamate--cysteine ligase type 2 family. YbdK subfamily.

The enzyme catalyses L-cysteine + L-glutamate + ATP = gamma-L-glutamyl-L-cysteine + ADP + phosphate + H(+). In terms of biological role, ATP-dependent carboxylate-amine ligase which exhibits weak glutamate--cysteine ligase activity. The polypeptide is Putative glutamate--cysteine ligase 2 (Burkholderia lata (strain ATCC 17760 / DSM 23089 / LMG 22485 / NCIMB 9086 / R18194 / 383)).